The sequence spans 104 residues: Turripeptide OL55-like (104 aa).

Post-translationally, contains 8 disulfide bonds. In terms of tissue distribution, expressed by the venom duct.

Its subcellular location is the secreted. Its function is as follows. Acts as a neurotoxin by inhibiting an ion channel. The protein is Turripeptide OL55-like of Iotyrris cingulifera (Sea snail).